The chain runs to 242 residues: Proteasome subunit alpha (242 aa).

The protein belongs to the peptidase T1A family. The 20S proteasome core is composed of 14 alpha and 14 beta subunits that assemble into four stacked heptameric rings, resulting in a barrel-shaped structure. The two inner rings, each composed of seven catalytic beta subunits, are sandwiched by two outer rings, each composed of seven alpha subunits. The catalytic chamber with the active sites is on the inside of the barrel. Has a gated structure, the ends of the cylinder being occluded by the N-termini of the alpha-subunits. Is capped at one or both ends by the proteasome regulatory ATPase, PAN.

The protein resides in the cytoplasm. Its activity is regulated as follows. The formation of the proteasomal ATPase PAN-20S proteasome complex, via the docking of the C-termini of PAN into the intersubunit pockets in the alpha-rings, triggers opening of the gate for substrate entry. Interconversion between the open-gate and close-gate conformations leads to a dynamic regulation of the 20S proteasome proteolysis activity. Functionally, component of the proteasome core, a large protease complex with broad specificity involved in protein degradation. This Sulfolobus acidocaldarius (strain ATCC 33909 / DSM 639 / JCM 8929 / NBRC 15157 / NCIMB 11770) protein is Proteasome subunit alpha.